A 334-amino-acid chain; its full sequence is D-alanine--D-alanine ligase (334 aa).

The 206-residue stretch at 124-329 folds into the ATP-grasp domain; sequence KMWFSALGIP…FAQYLSGNIL (206 aa). 154–209 serves as a coordination point for ATP; that stretch reads ALAKWGSIFIKAASQGSSVGCYRVDSIEQLASSLEEAFTFSPYVVIEKTITARELE. D283, E296, and N298 together coordinate Mg(2+).

Belongs to the D-alanine--D-alanine ligase family. Mg(2+) serves as cofactor. It depends on Mn(2+) as a cofactor.

The protein localises to the cytoplasm. The enzyme catalyses 2 D-alanine + ATP = D-alanyl-D-alanine + ADP + phosphate + H(+). Its pathway is cell wall biogenesis; peptidoglycan biosynthesis. Its function is as follows. Cell wall formation. The protein is D-alanine--D-alanine ligase of Shewanella pealeana (strain ATCC 700345 / ANG-SQ1).